Reading from the N-terminus, the 1259-residue chain is Ankyrin repeat and sterile alpha motif domain-containing protein 1B (1259 aa).

ANK repeat units lie at residues 2-31 (GKDQ…GGIL), 58-87 (SGYT…STNV), 91-120 (KGYF…SHSR), 127-156 (ENET…DPTI), 160-189 (KLET…NLMS), 193-222 (RKHT…DVSC), and 225-254 (EKGS…DANI). The segment at 298–325 (HAQEDTAQETHLSSPAESPQKTKSETVT) is disordered. The span at 306-325 (ETHLSSPAESPQKTKSETVT) shows a compositional bias: polar residues. 5 positions are modified to phosphoserine: Ser310, Ser311, Ser315, Ser353, and Ser364. Disordered regions lie at residues 367–401 (ELGK…SCGP), 490–513 (PGTS…SPDT), 556–614 (CTSF…GSSP), and 631–661 (TCED…EPSV). Positions 371 to 384 (NGSQSVRTSSTINL) are enriched in polar residues. Position 503 is a phosphothreonine (Thr503). A phosphoserine mark is found at Ser507 and Ser510. Residues 556-574 (CTSFTSSPAASPPTSSVET) are compositionally biased toward low complexity. The span at 575 to 587 (TEVKNEGAEHADD) shows a compositional bias: basic and acidic residues. Ser738 is subject to Phosphoserine. A disordered region spans residues 753–776 (VNWSKSSTAERSSKDNSERTPSFT). At Thr772 the chain carries Phosphothreonine. Residue Ser774 is modified to Phosphoserine. 2 consecutive SAM domains span residues 809–875 (CPVQ…LPKM) and 883–948 (YHPT…RLHD). Tyr900 bears the Phosphotyrosine mark. His934 is a short sequence motif (nuclear localization signal). Residues 943–988 (GDRLHDDPPQKPPRSITLREPSGNHTPPQLSPSLSQSTYTTGGSLD) form a disordered region. The segment covering 968 to 983 (TPPQLSPSLSQSTYTT) has biased composition (low complexity). Position 973 is a phosphoserine (Ser973). Residue Tyr1006 is modified to Phosphotyrosine. The PID domain occupies 1055 to 1212 (IFQSCDYKAF…SFENKPSKPI (158 aa)). A disordered region spans residues 1196 to 1216 (HSSTLPESFENKPSKPIPKPR).

In terms of assembly, interacts with EPHA8. Isoform 2 interacts with COIL.

The protein resides in the cytoplasm. It localises to the nucleus. It is found in the postsynaptic density. Its subcellular location is the cell projection. The protein localises to the dendritic spine. Isoform 2 may participate in the regulation of nucleoplasmic coilin protein interactions in neuronal and transformed cells. In Mus musculus (Mouse), this protein is Ankyrin repeat and sterile alpha motif domain-containing protein 1B (Anks1b).